A 253-amino-acid polypeptide reads, in one-letter code: 7-carboxy-7-deazaguanine synthase (253 aa).

Residues 12–14 and R32 each bind substrate; that span reads WQG. Residues 23–253 form the Radical SAM core domain; that stretch reads AFGRRQIFVR…FQVHKYLNVL (231 aa). C36, C40, and C43 together coordinate [4Fe-4S] cluster. S45 serves as a coordination point for Mg(2+). Position 98 (T98) interacts with substrate. G100 is a binding site for S-adenosyl-L-methionine.

Belongs to the radical SAM superfamily. 7-carboxy-7-deazaguanine synthase family. As to quaternary structure, homodimer. The cofactor is [4Fe-4S] cluster. Requires S-adenosyl-L-methionine as cofactor. Mg(2+) serves as cofactor.

It carries out the reaction 6-carboxy-5,6,7,8-tetrahydropterin + H(+) = 7-carboxy-7-deazaguanine + NH4(+). Its pathway is purine metabolism; 7-cyano-7-deazaguanine biosynthesis. Functionally, catalyzes the complex heterocyclic radical-mediated conversion of 6-carboxy-5,6,7,8-tetrahydropterin (CPH4) to 7-carboxy-7-deazaguanine (CDG), a step common to the biosynthetic pathways of all 7-deazapurine-containing compounds. The chain is 7-carboxy-7-deazaguanine synthase from Thermococcus kodakarensis (strain ATCC BAA-918 / JCM 12380 / KOD1) (Pyrococcus kodakaraensis (strain KOD1)).